A 1071-amino-acid polypeptide reads, in one-letter code: Intracellular phospholipase A2 (1071 aa).

The segment at 1-22 (MTTTNKDGPFRQQYLPGVHKEP) is disordered. ANK repeat units lie at residues 411–440 (ENCY…TLFC), 479–508 (DGQS…KFTR), 510–539 (DRNE…EIAN), 544–570 (LGNS…ELGL), 578–610 (AGET…NMNA), 614–651 (HGNT…KINL), and 652–681 (RGES…TRCP). One can recognise a PNPLA domain in the interval 748-921 (ISMDGGGIRG…ISNNPALDLM (174 aa)). A GXGXXG motif is present at residues 752-757 (GGGIRG). The GXSXG signature appears at 784 to 788 (GTSTG). Serine 786 acts as the Nucleophile in catalysis. Aspartate 908 serves as the catalytic Proton acceptor. Positions 908–910 (DGG) match the DGA/G motif.

The protein belongs to the patatin family.

The enzyme catalyses a 1,2-diacyl-sn-glycero-3-phosphocholine + H2O = a 1-acyl-sn-glycero-3-phosphocholine + a fatty acid + H(+). Its function is as follows. Phospholipase that plays a critical role during oogenesis, ovulation, and/or embryogenesis. This chain is Intracellular phospholipase A2, found in Caenorhabditis elegans.